Reading from the N-terminus, the 64-residue chain is Putative H/ACA ribonucleoprotein complex subunit 3 (64 aa).

This sequence belongs to the NOP10 family. Component of the small nucleolar ribonucleoprotein particles containing H/ACA-type snoRNAs (H/ACA snoRNPs).

The protein resides in the nucleus. Its subcellular location is the nucleolus. Its function is as follows. Required for ribosome biogenesis. Part of a complex which catalyzes pseudouridylation of rRNA. This involves the isomerization of uridine such that the ribose is subsequently attached to C5, instead of the normal N1. Pseudouridine ('psi') residues may serve to stabilize the conformation of rRNAs. The protein is Putative H/ACA ribonucleoprotein complex subunit 3 (nola-3) of Caenorhabditis elegans.